A 274-amino-acid chain; its full sequence is MTLQQQIIEELRVQPTINAQEEIRKSIDFLKEYAKHYSFVKGFVLGISGGQDSTLTGKLAQLAVDELNKEVGEMKYSFWAIRLPYGVQADEQDCQDAIDYIKPTGSYTVNIKDAVDASVKALANAGVELNDFVKGNEKARERMKVQYSIAAMNGGVVLGTDHAAEAITGFYTKFGDGGADLMPIFRLNKRQGKQLLAELNCPEHLYTKVPTADLEENRPSLPDEVALGVSYDQIDDYLEGKEIPEEPRQLLEGYYLRSQHKRHMPITIFDVFWK.

46–53 (GISGGQDS) contacts ATP. Aspartate 52 provides a ligand contact to Mg(2+). Arginine 140 contacts deamido-NAD(+). Threonine 160 is an ATP binding site. Glutamate 165 is a Mg(2+) binding site. Deamido-NAD(+) contacts are provided by lysine 173 and aspartate 180. Residues lysine 189 and threonine 211 each coordinate ATP. 260–261 (HK) provides a ligand contact to deamido-NAD(+).

This sequence belongs to the NAD synthetase family. In terms of assembly, homodimer.

The catalysed reaction is deamido-NAD(+) + NH4(+) + ATP = AMP + diphosphate + NAD(+) + H(+). Its pathway is cofactor biosynthesis; NAD(+) biosynthesis; NAD(+) from deamido-NAD(+) (ammonia route): step 1/1. Catalyzes the ATP-dependent amidation of deamido-NAD to form NAD. Uses ammonia as a nitrogen source. The protein is NH(3)-dependent NAD(+) synthetase of Lysinibacillus sphaericus (strain C3-41).